We begin with the raw amino-acid sequence, 201 residues long: MSKRIAGPEIERLIQLLARVPGLGPRSARRAALHLIKKKEALLVPLGGAMQEAAEKVRICSCCGNVDTSDPCTICTDERRDPATLIVVEDVSDLWALERADTMNVRYHVLGGRLSPLDGIGPDDLNIKGLVERVASGAIKEVILAVNATVEGQTTAHYITDQLSNFDVRVTRLAHGVPVGGELDYLDEGTLAAALRARTTL.

Residues 60–75 form a C4-type zinc finger; that stretch reads CSCCGNVDTSDPCTIC. The 96-residue stretch at 83-178 folds into the Toprim domain; that stretch reads ATLIVVEDVS…RVTRLAHGVP (96 aa).

The protein belongs to the RecR family.

Its function is as follows. May play a role in DNA repair. It seems to be involved in an RecBC-independent recombinational process of DNA repair. It may act with RecF and RecO. The sequence is that of Recombination protein RecR from Brucella melitensis biotype 1 (strain ATCC 23456 / CCUG 17765 / NCTC 10094 / 16M).